The chain runs to 466 residues: Phytase A (466 aa).

Positions 1–19 are cleaved as a signal peptide; the sequence is MGVFVVLLSIATLFGSTSG. Asparagine 27 is a glycosylation site (N-linked (GlcNAc...) asparagine). A disulfide bridge links cysteine 31 with cysteine 40. Tyrosine 51, arginine 81, histidine 82, arginine 85, and threonine 88 together coordinate 1D-myo-inositol hexakisphosphate. Disulfide bonds link cysteine 71-cysteine 414, cysteine 215-cysteine 465, cysteine 264-cysteine 282, and cysteine 436-cysteine 444. Histidine 82 (nucleophile) is an active-site residue. N-linked (GlcNAc...) asparagine glycans are attached at residues asparagine 105 and asparagine 120. Arginine 165 is a 1D-myo-inositol hexakisphosphate binding site. Asparagine 207 and asparagine 230 each carry an N-linked (GlcNAc...) asparagine glycan. Position 301 (lysine 301) interacts with 1D-myo-inositol hexakisphosphate. N-linked (GlcNAc...) asparagine glycans are attached at residues asparagine 339 and asparagine 352. Positions 361 and 362 each coordinate 1D-myo-inositol hexakisphosphate. Asparagine 376 carries N-linked (GlcNAc...) asparagine glycosylation.

The protein belongs to the histidine acid phosphatase family. As to quaternary structure, monomer.

It localises to the secreted. It carries out the reaction 1D-myo-inositol hexakisphosphate + H2O = 1D-myo-inositol 1,2,4,5,6-pentakisphosphate + phosphate. It catalyses the reaction 1D-myo-inositol 1,2,4,5,6-pentakisphosphate + H2O = 1D-myo-inositol 1,2,5,6-tetrakisphosphate + phosphate. The enzyme catalyses 1D-myo-inositol 1,2,5,6-tetrakisphosphate + H2O = 1D-myo-inositol 1,2,6-trisphosphate + phosphate. The catalysed reaction is 1D-myo-inositol 1,2,6-trisphosphate + H2O = 1D-myo-inositol 1,2-bisphosphate + phosphate. It carries out the reaction 1D-myo-inositol 1,2-bisphosphate + H2O = 1D-myo-inositol 2-phosphate + phosphate. Functionally, catalyzes the phosphate monoester hydrolysis of phytic acid (myo-inositol hexakisphosphate), which results in the stepwise formation of myo-inositol pentakis-, tetrakis-, tris-, bis-, and monophosphates, as well as the liberation of inorganic phosphate. Myo-inositol 2-monophosphate is the end product. Has a broad substrate specificity and is also able to dephosphorylate other classic acid phosphatase substrates such as p-nitrophenyl phosphate, phenyl phosphate, fructose 1,6-bisphosphate, glucose 6-phosphate, 3-phosphoglycerate, as well as ADP and ATP. In Aspergillus terreus, this protein is Phytase A.